Reading from the N-terminus, the 270-residue chain is Ribonuclease HII (270 aa).

The 195-residue stretch at 28 to 222 (RQVAGADEAG…VSGRQGAPPR (195 aa)) folds into the RNase H type-2 domain. 3 residues coordinate a divalent metal cation: Asp-34, Glu-35, and Asp-128.

It belongs to the RNase HII family. Requires Mn(2+) as cofactor. It depends on Mg(2+) as a cofactor.

It is found in the cytoplasm. The enzyme catalyses Endonucleolytic cleavage to 5'-phosphomonoester.. In terms of biological role, endonuclease that specifically degrades the RNA of RNA-DNA hybrids. This chain is Ribonuclease HII, found in Salinispora tropica (strain ATCC BAA-916 / DSM 44818 / JCM 13857 / NBRC 105044 / CNB-440).